The primary structure comprises 134 residues: Small ribosomal subunit protein uS8c (134 aa).

This sequence belongs to the universal ribosomal protein uS8 family. In terms of assembly, part of the 30S ribosomal subunit.

It is found in the plastid. The protein resides in the chloroplast. In terms of biological role, one of the primary rRNA binding proteins, it binds directly to 16S rRNA central domain where it helps coordinate assembly of the platform of the 30S subunit. The sequence is that of Small ribosomal subunit protein uS8c (rps8) from Chloranthus spicatus (Chulantree).